The sequence spans 68 residues: Large ribosomal subunit protein bL33c (68 aa).

Belongs to the bacterial ribosomal protein bL33 family.

The protein localises to the plastid. Its subcellular location is the chloroplast. The protein is Large ribosomal subunit protein bL33c of Piper cenocladum (Ant piper).